The following is a 411-amino-acid chain: Arginine deiminase (411 aa).

Cysteine 401 (amidino-cysteine intermediate) is an active-site residue.

The protein belongs to the arginine deiminase family.

It localises to the cytoplasm. The enzyme catalyses L-arginine + H2O = L-citrulline + NH4(+). Its pathway is amino-acid degradation; L-arginine degradation via ADI pathway; carbamoyl phosphate from L-arginine: step 1/2. The chain is Arginine deiminase from Staphylococcus aureus (strain bovine RF122 / ET3-1).